The following is a 67-amino-acid chain: Probable Sec-independent protein translocase protein TatE (67 aa).

A helical membrane pass occupies residues 1–21 (MEGISLAKLLIVGALIVLLFG). The disordered stretch occupies residues 43–67 (MNDDSDATSKTASEDKNAGQAVHKE). The span at 54–67 (ASEDKNAGQAVHKE) shows a compositional bias: basic and acidic residues.

This sequence belongs to the TatA/E family. TatE subfamily.

The protein localises to the cell inner membrane. Functionally, part of the twin-arginine translocation (Tat) system that transports large folded proteins containing a characteristic twin-arginine motif in their signal peptide across membranes. TatE shares overlapping functions with TatA. This Erwinia tasmaniensis (strain DSM 17950 / CFBP 7177 / CIP 109463 / NCPPB 4357 / Et1/99) protein is Probable Sec-independent protein translocase protein TatE.